The following is a 682-amino-acid chain: uncharacterized protein (682 aa).

Positions 284–487 (VVNILADRLI…KDKDIAEYIV (204 aa)) constitute an MCM domain. ATP is bound at residue 329–336 (TDPGIGKT).

The protein belongs to the MCM family.

This is an uncharacterized protein from Methanocaldococcus jannaschii (strain ATCC 43067 / DSM 2661 / JAL-1 / JCM 10045 / NBRC 100440) (Methanococcus jannaschii).